The sequence spans 383 residues: Homeobox protein knotted-1-like 5 (383 aa).

Disordered regions lie at residues 1–35 and 52–73; these read MSFNSSHLLPPQEDLPLRHFTDQSQQPPPQRHFSE and TTADSDLAPPHRNGDNSVADTN. Positions 281–301 constitute an ELK domain; the sequence is ELKHELKQGFKEKIVDIREEI. Residues 302 to 365 constitute a DNA-binding region (homeobox; TALE-type); the sequence is MRKRRAGKLP…NQRKRNWNSN (64 aa). Residues 361 to 383 are disordered; the sequence is NWNSNSSTSSTLTKNKRKRTGKS. Residues 362-373 are compositionally biased toward low complexity; that stretch reads WNSNSSTSSTLT. Residues 374 to 383 show a composition bias toward basic residues; sequence KNKRKRTGKS.

The protein belongs to the TALE/KNOX homeobox family. May form heterodimeric complex with the TALE/BELL protein BEL1, BLH1 and BLH2. Interacts with OFP1, OFP2, OFP3 and OFP4.

The protein localises to the nucleus. The chain is Homeobox protein knotted-1-like 5 (KNAT5) from Arabidopsis thaliana (Mouse-ear cress).